Here is a 428-residue protein sequence, read N- to C-terminus: C4-dicarboxylate transport protein (428 aa).

The next 9 membrane-spanning stretches (helical) occupy residues 7–27, 40–60, 75–95, 143–163, 196–216, 221–241, 306–326, 329–349, and 351–371; these read SLYFWVLVAIALGVILGIVAP, FIKLIKMVIAPIIFCTVVLGI, LALLYFEVVSTVSLILGLLIV, AFARGEILQVLLLAVLFGIAL, PIGAFGAMAFTIGAYGIGSLF, LMATFYLTCLCFIFLVLGAIA, IYLTMAAVFVAQATNSAMTLG, FTLLAVLLLMSKGAAGVTGSG, and IVLAATLSAIGKVPVGGLALI.

Belongs to the dicarboxylate/amino acid:cation symporter (DAACS) (TC 2.A.23) family.

The protein resides in the cell inner membrane. In terms of biological role, responsible for the transport of dicarboxylates such as succinate, fumarate, and malate from the periplasm across the membrane. This chain is C4-dicarboxylate transport protein, found in Solibacter usitatus (strain Ellin6076).